We begin with the raw amino-acid sequence, 108 residues long: UPF0060 membrane protein CJA_3703 (108 aa).

The next 4 helical transmembrane spans lie at 6 to 26 (LLFV…YLWL), 31 to 51 (SIWL…LLTL), 61 to 81 (AAYG…VDGV), and 85 to 105 (AYDW…AMGW).

This sequence belongs to the UPF0060 family.

It is found in the cell inner membrane. The sequence is that of UPF0060 membrane protein CJA_3703 from Cellvibrio japonicus (strain Ueda107) (Pseudomonas fluorescens subsp. cellulosa).